Here is a 298-residue protein sequence, read N- to C-terminus: Inosose dehydratase (298 aa).

This sequence belongs to the IolE/MocC family. The cofactor is glutathione. Co(2+) serves as cofactor. It depends on Mn(2+) as a cofactor.

The enzyme catalyses scyllo-inosose = 3D-3,5/4-trihydroxycyclohexane-1,2-dione + H2O. In terms of biological role, catalyzes the dehydration of inosose (2-keto-myo-inositol, 2KMI or 2,4,6/3,5-pentahydroxycyclohexanone) to 3D-(3,5/4)-trihydroxycyclohexane-1,2-dione (D-2,3-diketo-4-deoxy-epi-inositol). The sequence is that of Inosose dehydratase from Yersinia enterocolitica serotype O:8 / biotype 1B (strain NCTC 13174 / 8081).